The sequence spans 448 residues: Phosphoglucosamine mutase (448 aa).

The active-site Phosphoserine intermediate is Ser100. Mg(2+)-binding residues include Ser100, Asp240, Asp242, and Asp244. Ser100 is subject to Phosphoserine.

It belongs to the phosphohexose mutase family. Mg(2+) serves as cofactor. In terms of processing, activated by phosphorylation.

The catalysed reaction is alpha-D-glucosamine 1-phosphate = D-glucosamine 6-phosphate. Functionally, catalyzes the conversion of glucosamine-6-phosphate to glucosamine-1-phosphate. This chain is Phosphoglucosamine mutase, found in Bacillus anthracis (strain A0248).